Here is a 205-residue protein sequence, read N- to C-terminus: Regulator of G-protein signaling 4 (205 aa).

S-palmitoyl cysteine attachment occurs at residues Cys2, Cys12, and Cys95. Residues 62–178 (SLENLINHEC…LKSRFYLDLT (117 aa)) form the RGS domain.

Either Cys-2 or Cys-12 or both are palmitoylated. In terms of processing, phosphorylated by cyclic GMP-dependent protein kinase.

Its function is as follows. Inhibits signal transduction by increasing the GTPase activity of G protein alpha subunits thereby driving them into their inactive GDP-bound form. Activity on G(z)-alpha is inhibited by phosphorylation of the G-protein. Activity on G(z)-alpha and G(i)-alpha-1 is inhibited by palmitoylation of the G-protein. The polypeptide is Regulator of G-protein signaling 4 (Rgs4) (Rattus norvegicus (Rat)).